A 420-amino-acid polypeptide reads, in one-letter code: Glutamate dehydrogenase (420 aa).

Lysine 105 is an active-site residue. 220–226 (GYGNAGY) is a binding site for NAD(+).

It belongs to the Glu/Leu/Phe/Val dehydrogenases family. In terms of assembly, homohexamer.

The protein localises to the cytoplasm. The catalysed reaction is L-glutamate + NAD(+) + H2O = 2-oxoglutarate + NH4(+) + NADH + H(+). It catalyses the reaction L-glutamate + NADP(+) + H2O = 2-oxoglutarate + NH4(+) + NADPH + H(+). The protein is Glutamate dehydrogenase (gdhA) of Pyrococcus abyssi (strain GE5 / Orsay).